Reading from the N-terminus, the 471-residue chain is MTLLQKEYNDVAYISGPLLFVNAASDLAYGAIVNIKDASGRSRGGQVISVTDQNAVIQVFEETRGLDLATASVSLVEDVARLGVSKEMIGRRFDGLGRPIDGLPQVVAEQRLSINGQAMNPAARAKPEEFIQTGISTIDVQTSLIRGQKLPIFSGSGLPHNELAAQIARQAKVPGHEGDFAVVFAAMGLTQREVSFFTQEFERTGALARSVLFLNKADDPAVERLLTPRMALTTAEYLAFEHGYHVLVILTDLTNYCEALREIGGAREEIPGRRGFPGYMYTDLASLYERAGVVEGKPGSVTQVPILSMPDDDITHPIPDLTGYITEGQIVVDRTLNSKGVFPPINPLPSLSRLQGNGIGKGKTRADHKNISDQLFAAYANGLDLRKLVAITGEDALTETDKLYLRFADDFEQYFIGQGDQDRSIDDSLTVAWGILSKLPQSQLTRISKDAIDKYYGTKMDEMWKGSRSLG.

Belongs to the ATPase alpha/beta chains family.

In terms of biological role, produces ATP from ADP in the presence of a proton gradient across the membrane. The V-type beta chain is a regulatory subunit. The chain is V-type ATP synthase beta chain from Deinococcus deserti (strain DSM 17065 / CIP 109153 / LMG 22923 / VCD115).